The sequence spans 103 residues: Co-chaperonin GroES (103 aa).

It belongs to the GroES chaperonin family. As to quaternary structure, heptamer of 7 subunits arranged in a ring. Interacts with the chaperonin GroEL.

It localises to the cytoplasm. In terms of biological role, together with the chaperonin GroEL, plays an essential role in assisting protein folding. The GroEL-GroES system forms a nano-cage that allows encapsulation of the non-native substrate proteins and provides a physical environment optimized to promote and accelerate protein folding. GroES binds to the apical surface of the GroEL ring, thereby capping the opening of the GroEL channel. This is Co-chaperonin GroES from Prochlorococcus marinus (strain SARG / CCMP1375 / SS120).